The following is a 40-amino-acid chain: Photosystem II reaction center protein J (40 aa).

Residues 8 to 28 traverse the membrane as a helical segment; the sequence is IPLWLIGTLTGILVIGLIGIF.

Belongs to the PsbJ family. PSII is composed of 1 copy each of membrane proteins PsbA, PsbB, PsbC, PsbD, PsbE, PsbF, PsbH, PsbI, PsbJ, PsbK, PsbL, PsbM, PsbT, PsbX, PsbY, PsbZ, Psb30/Ycf12, at least 3 peripheral proteins of the oxygen-evolving complex and a large number of cofactors. It forms dimeric complexes.

The protein resides in the plastid. It is found in the chloroplast thylakoid membrane. One of the components of the core complex of photosystem II (PSII). PSII is a light-driven water:plastoquinone oxidoreductase that uses light energy to abstract electrons from H(2)O, generating O(2) and a proton gradient subsequently used for ATP formation. It consists of a core antenna complex that captures photons, and an electron transfer chain that converts photonic excitation into a charge separation. This is Photosystem II reaction center protein J from Phalaenopsis aphrodite subsp. formosana (Moth orchid).